The following is a 300-amino-acid chain: Urease accessory protein UreD (300 aa).

Belongs to the UreD family. As to quaternary structure, ureD, UreF and UreG form a complex that acts as a GTP-hydrolysis-dependent molecular chaperone, activating the urease apoprotein by helping to assemble the nickel containing metallocenter of UreC. The UreE protein probably delivers the nickel.

The protein resides in the cytoplasm. Functionally, required for maturation of urease via the functional incorporation of the urease nickel metallocenter. The protein is Urease accessory protein UreD of Prochlorococcus marinus (strain MIT 9312).